Consider the following 360-residue polypeptide: Phospho-N-acetylmuramoyl-pentapeptide-transferase (360 aa).

10 consecutive transmembrane segments (helical) span residues 26–46 (TILGVLTALGIALLVGPAVIQ), 70–90 (GTPTMGGALILVAIAVATLLW), 97–117 (YVWVVLLTTLAFGVIGGVDDY), 132–152 (AKFFWQTVVALMAAVFLFSTA), 168–188 (VVLPLGLLFIPLVWLVVVGSS), 199–219 (GLAILPSVLVAGGLAVFAYAT), 236–256 (AGEVVVFCGALIGAGLGFLWF), 263–283 (VFMGDVGALALGAALGILAVV), 288–308 (LVLLIMGGVFVVETLSVMLQV), and 338–358 (VIVRFWIITVVLVLVGLAMLK).

This sequence belongs to the glycosyltransferase 4 family. MraY subfamily. Requires Mg(2+) as cofactor.

It is found in the cell inner membrane. It carries out the reaction UDP-N-acetyl-alpha-D-muramoyl-L-alanyl-gamma-D-glutamyl-meso-2,6-diaminopimeloyl-D-alanyl-D-alanine + di-trans,octa-cis-undecaprenyl phosphate = di-trans,octa-cis-undecaprenyl diphospho-N-acetyl-alpha-D-muramoyl-L-alanyl-D-glutamyl-meso-2,6-diaminopimeloyl-D-alanyl-D-alanine + UMP. The protein operates within cell wall biogenesis; peptidoglycan biosynthesis. Functionally, catalyzes the initial step of the lipid cycle reactions in the biosynthesis of the cell wall peptidoglycan: transfers peptidoglycan precursor phospho-MurNAc-pentapeptide from UDP-MurNAc-pentapeptide onto the lipid carrier undecaprenyl phosphate, yielding undecaprenyl-pyrophosphoryl-MurNAc-pentapeptide, known as lipid I. This Alkalilimnicola ehrlichii (strain ATCC BAA-1101 / DSM 17681 / MLHE-1) protein is Phospho-N-acetylmuramoyl-pentapeptide-transferase.